A 139-amino-acid polypeptide reads, in one-letter code: Nucleoside diphosphate kinase (139 aa).

ATP is bound by residues Lys-11, Phe-59, Arg-87, Thr-93, Arg-104, and Asn-114. His-117 serves as the catalytic Pros-phosphohistidine intermediate.

The protein belongs to the NDK family. As to quaternary structure, homotetramer. The cofactor is Mg(2+).

The protein localises to the cytoplasm. The catalysed reaction is a 2'-deoxyribonucleoside 5'-diphosphate + ATP = a 2'-deoxyribonucleoside 5'-triphosphate + ADP. The enzyme catalyses a ribonucleoside 5'-diphosphate + ATP = a ribonucleoside 5'-triphosphate + ADP. Functionally, major role in the synthesis of nucleoside triphosphates other than ATP. The ATP gamma phosphate is transferred to the NDP beta phosphate via a ping-pong mechanism, using a phosphorylated active-site intermediate. The sequence is that of Nucleoside diphosphate kinase from Wolbachia pipientis wMel.